Here is a 204-residue protein sequence, read N- to C-terminus: Small ribosomal subunit protein uS7 (204 aa).

Met1 bears the N-acetylmethionine mark. Thr2 carries the post-translational modification N-acetylthreonine; in 40S ribosomal protein S5, N-terminally processed. Thr14 is subject to Phosphothreonine. The residue at position 47 (Lys47) is an N6-acetyllysine; alternate. Residue Lys47 forms a Glycyl lysine isopeptide (Lys-Gly) (interchain with G-Cter in SUMO2); alternate linkage. A Phosphoserine modification is found at Ser142.

Belongs to the universal ribosomal protein uS7 family. Component of the small ribosomal subunit. Part of the small subunit (SSU) processome, composed of more than 70 proteins and the RNA chaperone small nucleolar RNA (snoRNA) U3.

Its subcellular location is the cytoplasm. The protein localises to the nucleus. It localises to the nucleolus. Component of the small ribosomal subunit. The ribosome is a large ribonucleoprotein complex responsible for the synthesis of proteins in the cell. Part of the small subunit (SSU) processome, first precursor of the small eukaryotic ribosomal subunit. During the assembly of the SSU processome in the nucleolus, many ribosome biogenesis factors, an RNA chaperone and ribosomal proteins associate with the nascent pre-rRNA and work in concert to generate RNA folding, modifications, rearrangements and cleavage as well as targeted degradation of pre-ribosomal RNA by the RNA exosome. The sequence is that of Small ribosomal subunit protein uS7 (Rps5) from Mus musculus (Mouse).